A 132-amino-acid chain; its full sequence is DNA-packaging protein FI (132 aa).

The capsid binding stretch occupies residues Glu81 to Gln132.

As to quaternary structure, interacts with major capsid protein via c-terminus.

The protein localises to the host cytoplasm. Stimulates the interaction of procapsid with the terminase-DNA complex, thereby increasing the overall rate of DNA packaging. Before packaging, it likely coats the surface of the procapsid through binding mediated by C-terminal domain. FI presumably dissociates from the capsid once it inflates upon DNA packaging, and is not present in the mature virion. This chain is DNA-packaging protein FI (Fi), found in Escherichia coli (Bacteriophage lambda).